Reading from the N-terminus, the 252-residue chain is Carbohydrate deacetylase (252 aa).

2 residues coordinate Mg(2+): His59 and His122.

It belongs to the YdjC deacetylase family. As to quaternary structure, homodimer. It depends on Mg(2+) as a cofactor.

Its function is as follows. Probably catalyzes the deacetylation of acetylated carbohydrates an important step in the degradation of oligosaccharides. The polypeptide is Carbohydrate deacetylase (Vibrio cholerae serotype O1 (strain ATCC 39541 / Classical Ogawa 395 / O395)).